The sequence spans 211 residues: BAG family molecular chaperone regulator 2 (211 aa).

Position 2 is an N-acetylalanine (alanine 2). Residues serine 20, serine 31, and serine 73 each carry the phosphoserine modification. The stretch at 20-61 forms a coiled coil; it reads SMADRSSRLLESLDQLELRVEALREAATAVEQEKEILLEMIH. Residues 109-189 enclose the BAG domain; that stretch reads SLKHATRIID…NIENSDKAIK (81 aa).

In terms of assembly, binds to the ATPase domain of HSP/HSC70 chaperones. May interact with NWD1. Interacts with HSPA1A (via NBD), HSPA1B (via NBD) and HSPA8. May interact with DNJC9; the interaction seems to be histone-dependent.

Co-chaperone for HSP70 and HSC70 chaperone proteins. Acts as a nucleotide-exchange factor (NEF) promoting the release of ADP from the HSP70 and HSC70 proteins thereby triggering client/substrate protein release. The protein is BAG family molecular chaperone regulator 2 (BAG2) of Homo sapiens (Human).